The chain runs to 647 residues: A-type voltage-gated potassium channel KCND1 (647 aa).

The Cytoplasmic portion of the chain corresponds to 1–183; it reads MAAGLATWLP…RAFENPHTST (183 aa). Residues 2 to 20 form an interaction with KCNIP1, KCNIP2, and other family members region; that stretch reads AAGLATWLPFARAAAVGWL. The Zn(2+) site is built by histidine 104, cysteine 131, and cysteine 132. Residues 144–163 form a disordered region; that stretch reads AERLAEDEEAEQAGDGPALP. The chain crosses the membrane as a helical span at residues 184 to 205; that stretch reads AALVFYYVTGFFIAVSVIANVV. The Extracellular portion of the chain corresponds to 206–230; the sequence is ETIPCRGSARRSSREQPCGERFPQA. Residues 231 to 252 form a helical membrane-spanning segment; it reads FFCMDTACVLIFTGEYLLRLFA. Residues 253–263 lie on the Cytoplasmic side of the membrane; that stretch reads APSRCRFLRSV. Residues 264 to 284 form a helical membrane-spanning segment; the sequence is MSLIDVVAILPYYIGLLVPKN. The Extracellular segment spans residues 285–287; the sequence is DDV. Residues 288-308 form a helical; Voltage-sensor membrane-spanning segment; the sequence is SGAFVTLRVFRVFRIFKFSRH. Topologically, residues 309–323 are cytoplasmic; that stretch reads SQGLRILGYTLKSCA. The segment at 310-323 is S4-S5 linker; that stretch reads QGLRILGYTLKSCA. A helical transmembrane segment spans residues 324-345; sequence SELGFLLFSLTMAIIIFATVMF. Residues 346–359 lie on the Extracellular side of the membrane; sequence YAEKGTNKTNFTSI. 2 N-linked (GlcNAc...) asparagine glycosylation sites follow: asparagine 352 and asparagine 355. Positions 360–371 form an intramembrane region, helical; the sequence is PAAFWYTIVTMT. Positions 372–377 match the Selectivity filter motif; the sequence is TLGYGD. The stretch at 372–379 is an intramembrane region; the sequence is TLGYGDMV. Topologically, residues 380-386 are extracellular; that stretch reads PSTIAGK. A helical membrane pass occupies residues 387–415; that stretch reads IFGSICSLSGVLVIALPVPVIVSNFSRIY. Residues 416–647 are Cytoplasmic-facing; the sequence is HQNQRADKRR…FPETVKISSL (232 aa). Position 458 is a phosphoserine (serine 458). Residues 474 to 489 form a required for dendritic targeting region; the sequence is FEQQHHHLLHCLEKTT. Over residues 506 to 524 the composition is skewed to low complexity; that stretch reads VSPGGRTSRSTSVSSQPVG. The disordered stretch occupies residues 506–531; sequence VSPGGRTSRSTSVSSQPVGPGSLLSS. Residue serine 555 is modified to Phosphoserine. The segment at 601–634 is disordered; sequence IPTPPANTPDESQPSSPGGGGRAGSTLRNSSLGT.

It belongs to the potassium channel family. D (Shal) (TC 1.A.1.2) subfamily. Kv4.1/KCND1 sub-subfamily. In terms of assembly, component of heteromultimeric potassium channels. Identified in potassium channel complexes containing KCND1, KCND2, KCND3, KCNIP1, KCNIP2, KCNIP3, KCNIP4, DPP6 and DPP10. As to expression, widely expressed. Highly expressed in brain, in particular in cerebellum and thalamus; detected at lower levels in the other parts of the brain.

The protein localises to the cell membrane. The catalysed reaction is K(+)(in) = K(+)(out). In terms of biological role, A-type voltage-gated potassium channel that mediates transmembrane potassium transport in excitable membranes in the brain. Mediates A-type current I(SA) in suprachiasmatic nucleus (SCN) neurons. Exhibits a low-threshold A-type current with a hyperpolarized steady-state inactivation midpoint and the recovery process was steeply voltage-dependent, with recovery being markedly faster at more negative potentials. May regulates repetitive firing rates in the suprachiasmatic nucleus (SCN) neurons and circadian rhythms in neuronal excitability and behavior. Contributes to the regulation of the circadian rhythm of action potential firing in suprachiasmatic nucleus neurons, which regulates the circadian rhythm of locomotor activity. The regulatory subunit KCNIP1 modulates the kinetics of channel inactivation, increases the current amplitudes and accelerates recovery from inactivation, shifts activation in a depolarizing direction. The regulatory subunit DPP10 decreases the voltage sensitivity of the inactivation channel gating. The chain is A-type voltage-gated potassium channel KCND1 from Homo sapiens (Human).